Reading from the N-terminus, the 692-residue chain is Elongation factor G (692 aa).

The region spanning histidine 9–aspartate 284 is the tr-type G domain. Residues alanine 18–threonine 25, aspartate 82–histidine 86, and asparagine 136–aspartate 139 each bind GTP.

This sequence belongs to the TRAFAC class translation factor GTPase superfamily. Classic translation factor GTPase family. EF-G/EF-2 subfamily.

It localises to the cytoplasm. In terms of biological role, catalyzes the GTP-dependent ribosomal translocation step during translation elongation. During this step, the ribosome changes from the pre-translocational (PRE) to the post-translocational (POST) state as the newly formed A-site-bound peptidyl-tRNA and P-site-bound deacylated tRNA move to the P and E sites, respectively. Catalyzes the coordinated movement of the two tRNA molecules, the mRNA and conformational changes in the ribosome. The protein is Elongation factor G of Campylobacter concisus (strain 13826).